Here is a 515-residue protein sequence, read N- to C-terminus: Putative cytochrome P450 CYP13A2 (515 aa).

A heme-binding site is contributed by Cys-460.

Belongs to the cytochrome P450 family. It depends on heme as a cofactor.

In terms of biological role, cytochromes P450 are a group of heme-thiolate monooxygenases. They oxidize a variety of structurally unrelated compounds, including steroids, fatty acids, and xenobiotics. This chain is Putative cytochrome P450 CYP13A2 (cyp-13A2), found in Caenorhabditis elegans.